The chain runs to 523 residues: MKKFKRRLSLTLRGSQTIDESLSELAEQMTIEESSSKDNEPIVKNGRPPTSHSVHSFLHQYTGSFKKPPLRRPHSVIGGSLGSFMAMPRNGSRLDIVHENLKMGSDGESDQASGTSSDEVQSPTGVCLRNRIHRRISMEDLNKRLSLPADIRIPDGYLEKLQISSPPFDQPMSRRSRRASLSEIGFGKMETYIKLEKLGEGTYATVYKGRSKLTENLVALKEIRLEHEEGAPCTAIREVSLLKDLKHANIVTLHDIVHTDKSLTLVFEYLDKDLKQYMDDCGNIMSMHNVKLFLYQILRGLAYCHRRKVLHRDLKPQNLLINERGELKLADFGLARAKSVPTKTYSNEVVTLWYRPPDVLLGSSEYSTQIDMWGVGCIFFEMASGRPLFPGSTVEDELHLIFRLLGTPSQETWPGVSSNDEFKNYNFPKYKPQPLINHAPRLDSEGIELITKFLQYESKKRVPAEEAMKHVYFRSLGPRIHALPESVSIFSLKEIQLQKDPGFRNSSYPETGHGKNRRQSMLF.

S9 carries the phosphoserine modification. The tract at residues 30–55 (TIEESSSKDNEPIVKNGRPPTSHSVH) is disordered. Residues S80, S92, and S105 each carry the phosphoserine modification. Residues 103-123 (MGSDGESDQASGTSSDEVQSP) form a disordered region. Residues 110–123 (DQASGTSSDEVQSP) are compositionally biased toward polar residues. A phosphoserine mark is found at S137, S146, S165, and S180. The Protein kinase domain occupies 192–473 (YIKLEKLGEG…AEEAMKHVYF (282 aa)). ATP is bound by residues 198–206 (LGEGTYATV) and K221. D313 (proton acceptor) is an active-site residue. The disordered stretch occupies residues 501-523 (PGFRNSSYPETGHGKNRRQSMLF). The segment covering 514-523 (GKNRRQSMLF) has biased composition (basic residues).

It belongs to the protein kinase superfamily. CMGC Ser/Thr protein kinase family. CDC2/CDKX subfamily. Found in a complex containing CABLES1, CDK16 and TDRD7. Interacts with TDRD7.

The catalysed reaction is L-seryl-[protein] + ATP = O-phospho-L-seryl-[protein] + ADP + H(+). It catalyses the reaction L-threonyl-[protein] + ATP = O-phospho-L-threonyl-[protein] + ADP + H(+). Functionally, may play a role in terminally differentiated neurons. Has a Ser/Thr-phosphorylating activity for histone H1. This Mus musculus (Mouse) protein is Cyclin-dependent kinase 17 (Cdk17).